Here is a 123-residue protein sequence, read N- to C-terminus: MRIQSLLLLGALLAVGSQPPAAFGRKKGEKSGGCPPDDGPCLLSVPDQCMEDSQCPWTRKCCYKACFRQCVPRVSVKLGSCPEDQLRCLSPMNHLCHKDADCSGKKRCCPSACGRDCRDPARG.

The first 24 residues, 1–24 (MRIQSLLLLGALLAVGSQPPAAFG), serve as a signal peptide directing secretion. WAP domains lie at 27-73 (KGEK…CVPR) and 74-121 (VSVK…RDPA). 8 disulfides stabilise this stretch: cysteine 34-cysteine 62, cysteine 41-cysteine 66, cysteine 49-cysteine 61, cysteine 55-cysteine 70, cysteine 81-cysteine 109, cysteine 88-cysteine 113, cysteine 96-cysteine 108, and cysteine 102-cysteine 117.

Its subcellular location is the secreted. In terms of biological role, putative acid-stable proteinase inhibitor. This chain is WAP four-disulfide core domain protein 5 (WFDC5), found in Saimiri boliviensis boliviensis (Bolivian squirrel monkey).